The following is a 637-amino-acid chain: Limonene/alpha-pinene synthase, chloroplastic (637 aa).

A chloroplast-targeting transit peptide spans 1–56 (MALLSIVSLQVPKSCGLKSLISSSNVQKALCISTAVPTLRMRRRQKALVINMKLTT). Mg(2+) is bound by residues Asp-388, Asp-392, and Asp-540. The DDXXD motif motif lies at 388–392 (DDMYD).

This sequence belongs to the terpene synthase family. Tpsd subfamily. The cofactor is Mg(2+). Requires Mn(2+) as cofactor. K(+) serves as cofactor.

It localises to the plastid. The protein resides in the chloroplast. The enzyme catalyses (2E)-geranyl diphosphate = (4S)-limonene + diphosphate. The catalysed reaction is (2E)-geranyl diphosphate = (1S,5S)-alpha-pinene + diphosphate. It functions in the pathway terpene metabolism; oleoresin biosynthesis. In terms of biological role, involved in defensive oleoresin formation in conifers in response to insect attack or other injury. Involved in monoterpene (C10) olefins biosynthesis. The protein is Limonene/alpha-pinene synthase, chloroplastic (ag11) of Abies grandis (Grand fir).